The following is a 251-amino-acid chain: Duodenase-1 (251 aa).

The N-terminal stretch at 1-17 (MVLLLLLVALLSPTGEA) is a signal peptide. Residues 18–19 (GK) constitute a propeptide that is removed on maturation. One can recognise a Peptidase S1 domain in the interval 20-242 (IIGGHEAKPH…SFLSWIHSTM (223 aa)). A disulfide bridge connects residues C48 and C64. Residue H63 is the Charge relay system of the active site. A glycan (N-linked (GlcNAc...) asparagine) is linked at N70. Residue D107 is the Charge relay system of the active site. 2 disulfide bridges follow: C141-C207 and C172-C186. The active-site Charge relay system is S201.

This sequence belongs to the peptidase S1 family. In terms of assembly, monomer.

Functionally, protease which has both trypsin-like and chymotrypsin-like activities. Shows a preferential cleavage after Lys, Arg, Tyr, Phe, and Leu residues. This Bos taurus (Bovine) protein is Duodenase-1 (BDMD1).